Reading from the N-terminus, the 235-residue chain is Orotidine 5'-phosphate decarboxylase (235 aa).

Substrate-binding positions include Asp16, Lys38, 65–74 (DLKLHDIGNT), Thr120, Arg181, Gln190, Gly210, and Arg211. Lys67 (proton donor) is an active-site residue.

This sequence belongs to the OMP decarboxylase family. Type 1 subfamily. In terms of assembly, homodimer.

It catalyses the reaction orotidine 5'-phosphate + H(+) = UMP + CO2. The protein operates within pyrimidine metabolism; UMP biosynthesis via de novo pathway; UMP from orotate: step 2/2. Catalyzes the decarboxylation of orotidine 5'-monophosphate (OMP) to uridine 5'-monophosphate (UMP). The protein is Orotidine 5'-phosphate decarboxylase of Rhodopseudomonas palustris (strain BisA53).